The chain runs to 244 residues: Nicotinamidase 1 (244 aa).

This sequence belongs to the isochorismatase family. As to expression, expressed in roots and stems, and at lower levels in flowers, siliques and leaves.

It carries out the reaction nicotinamide + H2O = nicotinate + NH4(+). The protein operates within cofactor biosynthesis; nicotinate biosynthesis; nicotinate from nicotinamide: step 1/1. In terms of biological role, catalyzes the deamidation of nicotinamide, an early step in the NAD(+) salvage pathway. Prevents the accumulation of intracellular nicotinamide, a known inhibitor of poly(ADP-ribose) polymerases (PARP enzymes). This chain is Nicotinamidase 1, found in Arabidopsis thaliana (Mouse-ear cress).